The chain runs to 160 residues: Lymphocyte antigen 96 (160 aa).

Residues Met1–Thr16 form the signal peptide. Intrachain disulfides connect Cys25-Cys51, Cys37-Cys148, and Cys95-Cys105. Residue Asn26 is glycosylated (N-linked (GlcNAc...) asparagine). The N-linked (GlcNAc...) asparagine glycan is linked to Asn114. Residues Phe119 to Gly123 form an interaction with lipopolysaccharide region. N-linked (GlcNAc...) asparagine glycosylation occurs at Asn150.

In terms of assembly, heterogeneous homomer formed from homodimers; disulfide-linked. Belongs to the lipopolysaccharide (LPS) receptor, a multi-protein complex containing at least CD14, LY96 and TLR4. Binds to the extracellular domains of TLR2 and TLR4. Ligand binding induces interaction with TLR4 and oligomerization of the complex. In terms of processing, N-glycosylated.

The protein localises to the secreted. The protein resides in the extracellular space. Binds bacterial lipopolysaccharide (LPS). Cooperates with TLR4 in the innate immune response to bacterial lipopolysaccharide (LPS), and with TLR2 in the response to cell wall components from Gram-positive and Gram-negative bacteria. Enhances TLR4-dependent activation of NF-kappa-B. Cells expressing both LY96 and TLR4, but not TLR4 alone, respond to LPS. This chain is Lymphocyte antigen 96 (LY96), found in Bos taurus (Bovine).